Consider the following 629-residue polypeptide: tRNA uridine 5-carboxymethylaminomethyl modification enzyme MnmG (629 aa).

11–16 contributes to the FAD binding site; that stretch reads GGGHAG. Residue 273 to 287 participates in NAD(+) binding; the sequence is GPRYCPSFEDKVVRF.

It belongs to the MnmG family. Homodimer. Heterotetramer of two MnmE and two MnmG subunits. The cofactor is FAD.

Its subcellular location is the cytoplasm. Functionally, NAD-binding protein involved in the addition of a carboxymethylaminomethyl (cmnm) group at the wobble position (U34) of certain tRNAs, forming tRNA-cmnm(5)s(2)U34. The polypeptide is tRNA uridine 5-carboxymethylaminomethyl modification enzyme MnmG (Mycoplasma capricolum subsp. capricolum (strain California kid / ATCC 27343 / NCTC 10154)).